A 229-amino-acid chain; its full sequence is 3-isopropylmalate dehydratase small subunit (229 aa).

Positions 198-229 are disordered; that stretch reads LPVKREPEQPIESAREGEYPDWQGPLADRGII. Positions 200-215 are enriched in basic and acidic residues; sequence VKREPEQPIESAREGE.

This sequence belongs to the LeuD family. LeuD type 1 subfamily. Heterodimer of LeuC and LeuD.

It catalyses the reaction (2R,3S)-3-isopropylmalate = (2S)-2-isopropylmalate. Its pathway is amino-acid biosynthesis; L-leucine biosynthesis; L-leucine from 3-methyl-2-oxobutanoate: step 2/4. Its function is as follows. Catalyzes the isomerization between 2-isopropylmalate and 3-isopropylmalate, via the formation of 2-isopropylmaleate. This is 3-isopropylmalate dehydratase small subunit from Bifidobacterium adolescentis (strain ATCC 15703 / DSM 20083 / NCTC 11814 / E194a).